The following is a 142-amino-acid chain: Large-conductance mechanosensitive channel (142 aa).

3 helical membrane passes run 14 to 34 (VVDLAVGVIIGAAFGAIVNSL), 38 to 58 (VIMPIIGAITGGLDFSNYYIP), and 82 to 102 (GQFLTLAVNFTIIAFVLFMVI).

It belongs to the MscL family. In terms of assembly, homopentamer.

The protein resides in the cell inner membrane. Its function is as follows. Channel that opens in response to stretch forces in the membrane lipid bilayer. May participate in the regulation of osmotic pressure changes within the cell. This Methylorubrum populi (strain ATCC BAA-705 / NCIMB 13946 / BJ001) (Methylobacterium populi) protein is Large-conductance mechanosensitive channel.